The primary structure comprises 197 residues: Xanthine phosphoribosyltransferase (197 aa).

Residues L20 and N27 each coordinate xanthine. A128 to A132 provides a ligand contact to 5-phospho-alpha-D-ribose 1-diphosphate. Xanthine is bound at residue K156.

The protein belongs to the purine/pyrimidine phosphoribosyltransferase family. Xpt subfamily. Homodimer.

It is found in the cytoplasm. The catalysed reaction is XMP + diphosphate = xanthine + 5-phospho-alpha-D-ribose 1-diphosphate. It functions in the pathway purine metabolism; XMP biosynthesis via salvage pathway; XMP from xanthine: step 1/1. Its function is as follows. Converts the preformed base xanthine, a product of nucleic acid breakdown, to xanthosine 5'-monophosphate (XMP), so it can be reused for RNA or DNA synthesis. This is Xanthine phosphoribosyltransferase from Bacillus cytotoxicus (strain DSM 22905 / CIP 110041 / 391-98 / NVH 391-98).